The sequence spans 185 residues: ATP-dependent protease subunit HslV (185 aa).

Threonine 14 is an active-site residue. Alanine 168, cysteine 171, and threonine 174 together coordinate Na(+).

This sequence belongs to the peptidase T1B family. HslV subfamily. In terms of assembly, a double ring-shaped homohexamer of HslV is capped on each side by a ring-shaped HslU homohexamer. The assembly of the HslU/HslV complex is dependent on binding of ATP.

It is found in the cytoplasm. The catalysed reaction is ATP-dependent cleavage of peptide bonds with broad specificity.. Allosterically activated by HslU binding. Functionally, protease subunit of a proteasome-like degradation complex believed to be a general protein degrading machinery. The protein is ATP-dependent protease subunit HslV of Hyphomonas neptunium (strain ATCC 15444).